Here is a 269-residue protein sequence, read N- to C-terminus: GTP cyclohydrolase FolE2 (269 aa).

Belongs to the GTP cyclohydrolase IV family.

It catalyses the reaction GTP + H2O = 7,8-dihydroneopterin 3'-triphosphate + formate + H(+). The protein operates within cofactor biosynthesis; 7,8-dihydroneopterin triphosphate biosynthesis; 7,8-dihydroneopterin triphosphate from GTP: step 1/1. In terms of biological role, converts GTP to 7,8-dihydroneopterin triphosphate. In Burkholderia vietnamiensis (strain G4 / LMG 22486) (Burkholderia cepacia (strain R1808)), this protein is GTP cyclohydrolase FolE2.